A 255-amino-acid polypeptide reads, in one-letter code: MSDYVVVKCGGSMLDQLNDVFFDCIKKLQQKYKVVIVHGGGPEIDAQLKDCNINVEKRDGLRVTPKEVMDVVQMVLCGSTNKKLVMNLQKHNLRAVGCSGCDGNLLQVQPVSEEIGYVGEVRYVETALLKGLINMNYIPVIAPVGINDNEIYNINADTAAAGIAAALSAKELIFITDVDGVLHEGKLVKKTDEFEIVNFIENGVITGGMIPKVQAAIASLKMGVQKVSIVNGMKDFTEVTGECIGTTVTRGVSIA.

Residues 40 to 41, Arg62, and Asn153 contribute to the substrate site; that span reads GG.

The protein belongs to the acetylglutamate kinase family. ArgB subfamily.

It is found in the cytoplasm. It carries out the reaction N-acetyl-L-glutamate + ATP = N-acetyl-L-glutamyl 5-phosphate + ADP. Its pathway is amino-acid biosynthesis; L-arginine biosynthesis; N(2)-acetyl-L-ornithine from L-glutamate: step 2/4. Catalyzes the ATP-dependent phosphorylation of N-acetyl-L-glutamate. The sequence is that of Acetylglutamate kinase from Bacillus cereus (strain ZK / E33L).